Consider the following 308-residue polypeptide: Homeobox protein HMX3 (308 aa).

Disordered regions lie at residues 1 to 57 (MPET…GFAL) and 107 to 184 (AEKS…KKKT). Over residues 9-19 (PSAPPPPPPPK) the composition is skewed to pro residues. 2 stretches are compositionally biased toward basic and acidic residues: residues 135–144 (AEQKERDPKS) and 156–177 (EEGKKEGGAEDWKKREESPEKK). The homeobox DNA-binding region spans 181-240 (KKKTRTVFSRSQVFQLESTFDMKRYLSSSERAGLAASLHLTETQVKIWFQNRRNKWKRQL).

Belongs to the HMX homeobox family.

Its subcellular location is the nucleus. Functionally, transcription factor involved in specification of neuronal cell types and which is required for inner ear and hypothalamus development. Binds to the 5'-CAAGTG-3' core sequence. In Gallus gallus (Chicken), this protein is Homeobox protein HMX3 (HMX3).